A 241-amino-acid polypeptide reads, in one-letter code: Uridylate kinase (241 aa).

Residue 14–17 (KLSG) participates in ATP binding. The segment at 22–27 (GGLGMG) is involved in allosteric activation by GTP. G56 is a UMP binding site. ATP is bound by residues G57 and R61. Residues D77 and 138–145 (TGNPFFTT) contribute to the UMP site. T165, Y171, and D174 together coordinate ATP.

This sequence belongs to the UMP kinase family. As to quaternary structure, homohexamer.

It localises to the cytoplasm. The enzyme catalyses UMP + ATP = UDP + ADP. The protein operates within pyrimidine metabolism; CTP biosynthesis via de novo pathway; UDP from UMP (UMPK route): step 1/1. With respect to regulation, allosterically activated by GTP. Inhibited by UTP. Catalyzes the reversible phosphorylation of UMP to UDP. The protein is Uridylate kinase of Psychrobacter sp. (strain PRwf-1).